The chain runs to 114 residues: U17-barytoxin-Tl1d (114 aa).

The N-terminal stretch at 1–20 (MKTIIVFLSLLVLATKFGDA) is a signal peptide. Positions 21 to 74 (NEGVNQEQMKEVIQNEFREDFLNEMAPMSLLQQLEAIESTLLEKEADRNSRQKR) are excised as a propeptide. Cystine bridges form between cysteine 75–cysteine 88, cysteine 82–cysteine 93, and cysteine 87–cysteine 108.

This sequence belongs to the neurotoxin 14 (magi-1) family. 03 (ICK-30-40) subfamily. In terms of tissue distribution, expressed by the venom gland.

Its subcellular location is the secreted. In terms of biological role, ion channel inhibitor. This chain is U17-barytoxin-Tl1d, found in Trittame loki (Brush-footed trapdoor spider).